We begin with the raw amino-acid sequence, 440 residues long: Thymidine phosphorylase (440 aa).

It belongs to the thymidine/pyrimidine-nucleoside phosphorylase family. As to quaternary structure, homodimer.

It catalyses the reaction thymidine + phosphate = 2-deoxy-alpha-D-ribose 1-phosphate + thymine. It functions in the pathway pyrimidine metabolism; dTMP biosynthesis via salvage pathway; dTMP from thymine: step 1/2. In terms of biological role, the enzymes which catalyze the reversible phosphorolysis of pyrimidine nucleosides are involved in the degradation of these compounds and in their utilization as carbon and energy sources, or in the rescue of pyrimidine bases for nucleotide synthesis. The protein is Thymidine phosphorylase of Salmonella dublin (strain CT_02021853).